The following is a 1342-amino-acid chain: DNA-directed RNA polymerase subunit beta (1342 aa).

This sequence belongs to the RNA polymerase beta chain family. In terms of assembly, the RNAP catalytic core consists of 2 alpha, 1 beta, 1 beta' and 1 omega subunit. When a sigma factor is associated with the core the holoenzyme is formed, which can initiate transcription.

It catalyses the reaction RNA(n) + a ribonucleoside 5'-triphosphate = RNA(n+1) + diphosphate. Functionally, DNA-dependent RNA polymerase catalyzes the transcription of DNA into RNA using the four ribonucleoside triphosphates as substrates. This chain is DNA-directed RNA polymerase subunit beta, found in Tolumonas auensis (strain DSM 9187 / NBRC 110442 / TA 4).